Consider the following 98-residue polypeptide: Large ribosomal subunit protein uL23 (98 aa).

Belongs to the universal ribosomal protein uL23 family. As to quaternary structure, part of the 50S ribosomal subunit. Contacts protein L29, and trigger factor when it is bound to the ribosome.

Functionally, one of the early assembly proteins it binds 23S rRNA. One of the proteins that surrounds the polypeptide exit tunnel on the outside of the ribosome. Forms the main docking site for trigger factor binding to the ribosome. The chain is Large ribosomal subunit protein uL23 from Bifidobacterium longum (strain DJO10A).